The primary structure comprises 104 residues: UPF0145 protein STH1265 (104 aa).

It belongs to the UPF0145 family.

This chain is UPF0145 protein STH1265, found in Symbiobacterium thermophilum (strain DSM 24528 / JCM 14929 / IAM 14863 / T).